A 55-amino-acid polypeptide reads, in one-letter code: Neurotoxin B-IV (55 aa).

Hydroxyproline is present on Pro10. 4 disulfides stabilise this stretch: Cys12-Cys52, Cys16-Cys48, Cys23-Cys41, and Cys26-Cys37.

It belongs to the worm B-toxin family.

The protein resides in the secreted. This toxin increases the excitability of nerves by delaying the inactivation of the voltage-gated sodium channel (Nav). Only acts on some crustacean. Is more abundant, but 15-fold less toxic than neurotoxin B-II. The polypeptide is Neurotoxin B-IV (Cerebratulus lacteus (Milky ribbon worm)).